The sequence spans 916 residues: Protein translocase subunit SecA (916 aa).

ATP is bound by residues glutamine 87, 105-109, and aspartate 507; that span reads GEGKT. Zn(2+) is bound by residues cysteine 900, cysteine 902, cysteine 911, and histidine 912.

It belongs to the SecA family. In terms of assembly, monomer and homodimer. Part of the essential Sec protein translocation apparatus which comprises SecA, SecYEG and auxiliary proteins SecDF-YajC and YidC. The cofactor is Zn(2+).

The protein resides in the cell inner membrane. It is found in the cytoplasm. It catalyses the reaction ATP + H2O + cellular proteinSide 1 = ADP + phosphate + cellular proteinSide 2.. Its function is as follows. Part of the Sec protein translocase complex. Interacts with the SecYEG preprotein conducting channel. Has a central role in coupling the hydrolysis of ATP to the transfer of proteins into and across the cell membrane, serving both as a receptor for the preprotein-SecB complex and as an ATP-driven molecular motor driving the stepwise translocation of polypeptide chains across the membrane. This chain is Protein translocase subunit SecA, found in Neisseria meningitidis serogroup A / serotype 4A (strain DSM 15465 / Z2491).